Consider the following 316-residue polypeptide: Thymidylate synthase (316 aa).

Residues Arg-23 and 178–179 (RR) each bind dUMP. The active-site Nucleophile is Cys-198. Residues 218–221 (RSGD), Asn-229, and 259–261 (HIY) contribute to the dUMP site. Asp-221 is a (6R)-5,10-methylene-5,6,7,8-tetrahydrofolate binding site. Ala-315 lines the (6R)-5,10-methylene-5,6,7,8-tetrahydrofolate pocket.

This sequence belongs to the thymidylate synthase family. Bacterial-type ThyA subfamily. In terms of assembly, homodimer.

The protein localises to the cytoplasm. It catalyses the reaction dUMP + (6R)-5,10-methylene-5,6,7,8-tetrahydrofolate = 7,8-dihydrofolate + dTMP. It participates in pyrimidine metabolism; dTTP biosynthesis. Functionally, catalyzes the reductive methylation of 2'-deoxyuridine-5'-monophosphate (dUMP) to 2'-deoxythymidine-5'-monophosphate (dTMP) while utilizing 5,10-methylenetetrahydrofolate (mTHF) as the methyl donor and reductant in the reaction, yielding dihydrofolate (DHF) as a by-product. This enzymatic reaction provides an intracellular de novo source of dTMP, an essential precursor for DNA biosynthesis. This chain is Thymidylate synthase, found in Lactiplantibacillus plantarum (strain ATCC BAA-793 / NCIMB 8826 / WCFS1) (Lactobacillus plantarum).